A 585-amino-acid polypeptide reads, in one-letter code: Formate--tetrahydrofolate ligase (585 aa).

Residue 65–72 participates in ATP binding; the sequence is TPHGEGKT.

This sequence belongs to the formate--tetrahydrofolate ligase family.

It catalyses the reaction (6S)-5,6,7,8-tetrahydrofolate + formate + ATP = (6R)-10-formyltetrahydrofolate + ADP + phosphate. The protein operates within one-carbon metabolism; tetrahydrofolate interconversion. This is Formate--tetrahydrofolate ligase from Shewanella baltica (strain OS155 / ATCC BAA-1091).